We begin with the raw amino-acid sequence, 403 residues long: Chaperone protein DnaJ (403 aa).

A J domain is found at 4 to 69; the sequence is DYYEILGVAR…DKRRRYDQFG (66 aa). The CR-type zinc-finger motif lies at 159–240; sequence GVEKTIKIKK…CYGEGIKQGE (82 aa). 8 residues coordinate Zn(2+): Cys172, Cys175, Cys188, Cys191, Cys214, Cys217, Cys228, and Cys231. 4 CXXCXGXG motif repeats span residues 172 to 179, 188 to 195, 214 to 221, and 228 to 235; these read CRECNGTG, CPTCHGSG, CPTCGGEG, and CPSCYGEG.

It belongs to the DnaJ family. In terms of assembly, homodimer. It depends on Zn(2+) as a cofactor.

The protein resides in the cytoplasm. Functionally, participates actively in the response to hyperosmotic and heat shock by preventing the aggregation of stress-denatured proteins and by disaggregating proteins, also in an autonomous, DnaK-independent fashion. Unfolded proteins bind initially to DnaJ; upon interaction with the DnaJ-bound protein, DnaK hydrolyzes its bound ATP, resulting in the formation of a stable complex. GrpE releases ADP from DnaK; ATP binding to DnaK triggers the release of the substrate protein, thus completing the reaction cycle. Several rounds of ATP-dependent interactions between DnaJ, DnaK and GrpE are required for fully efficient folding. Also involved, together with DnaK and GrpE, in the DNA replication of plasmids through activation of initiation proteins. In Chlorobaculum tepidum (strain ATCC 49652 / DSM 12025 / NBRC 103806 / TLS) (Chlorobium tepidum), this protein is Chaperone protein DnaJ.